Consider the following 289-residue polypeptide: YLVSPAAYAALGAYMFLLILIGFPVNFLTLYVTLEHKKLRTPLNYILLNLAVADLFMVLGGFTTTMYTSMHGYFVLGRLGCNLEGFFATLGGEIALWSLVVLAIERWIVVCKPISNFRFTEDNAIMGLAFSWVMALTCAVPPLVGWSRYIPEGMQCSCGVDYYTRAEGFNNESFVIYMFIVHFPIPLSVIFFCYGRLLCAVKEAAAAQQESETTQRAEKEVSRMVVILVIGFLVCWLPYASVAWWIFCNQGSDFGPIFMTLPSFFAKRPAIYNPMIYICMNKQFRHCMI.

Residues 1–7 (YLVSPAA) lie on the Extracellular side of the membrane. A helical membrane pass occupies residues 8–32 (YAALGAYMFLLILIGFPVNFLTLYV). Topologically, residues 33–44 (TLEHKKLRTPLN) are cytoplasmic. Residues 45-67 (YILLNLAVADLFMVLGGFTTTMY) form a helical membrane-spanning segment. The Extracellular segment spans residues 68–81 (TSMHGYFVLGRLGC). A disulfide bridge connects residues C81 and C158. The helical transmembrane segment at 82 to 104 (NLEGFFATLGGEIALWSLVVLAI) threads the bilayer. The 'Ionic lock' involved in activated form stabilization motif lies at 105 to 107 (ERW). At 105–123 (ERWIVVCKPISNFRFTEDN) the chain is on the cytoplasmic side. Residues 124–144 (AIMGLAFSWVMALTCAVPPLV) traverse the membrane as a helical segment. At 145 to 173 (GWSRYIPEGMQCSCGVDYYTRAEGFNNES) the chain is on the extracellular side. N171 carries an N-linked (GlcNAc...) asparagine glycan. Residues 174–195 (FVIYMFIVHFPIPLSVIFFCYG) form a helical membrane-spanning segment. Residues 196–223 (RLLCAVKEAAAAQQESETTQRAEKEVSR) lie on the Cytoplasmic side of the membrane. The helical transmembrane segment at 224-245 (MVVILVIGFLVCWLPYASVAWW) threads the bilayer. Topologically, residues 246–257 (IFCNQGSDFGPI) are extracellular. A helical transmembrane segment spans residues 258-279 (FMTLPSFFAKRPAIYNPMIYIC). K267 carries the post-translational modification N6-(retinylidene)lysine. Residues 280–289 (MNKQFRHCMI) lie on the Cytoplasmic side of the membrane.

It belongs to the G-protein coupled receptor 1 family. Opsin subfamily. Post-translationally, phosphorylated on some or all of the serine and threonine residues present in the C-terminal region. In terms of processing, contains one covalently linked retinal chromophore.

The protein localises to the membrane. It is found in the cell projection. The protein resides in the cilium. It localises to the photoreceptor outer segment. Its function is as follows. Photoreceptor required for image-forming vision at low light intensity. While most salt water fish species use retinal as chromophore, most freshwater fish use 3-dehydroretinal, or a mixture of retinal and 3-dehydroretinal. Light-induced isomerization of 11-cis to all-trans retinal triggers a conformational change that activates signaling via G-proteins. Subsequent receptor phosphorylation mediates displacement of the bound G-protein alpha subunit by arrestin and terminates signaling. The protein is Rhodopsin (rho) of Batrachocottus multiradiatus (Baikal sculpin).